A 465-amino-acid chain; its full sequence is Glutamate--tRNA ligase (465 aa).

The 'HIGH' region motif lies at 11–21 (PSPTGYLHIGG). The 'KMSKS' region signature appears at 243–247 (KLSKR). Position 246 (lysine 246) interacts with ATP.

The protein belongs to the class-I aminoacyl-tRNA synthetase family. Glutamate--tRNA ligase type 1 subfamily. As to quaternary structure, monomer.

It localises to the cytoplasm. It carries out the reaction tRNA(Glu) + L-glutamate + ATP = L-glutamyl-tRNA(Glu) + AMP + diphosphate. Its function is as follows. Catalyzes the attachment of glutamate to tRNA(Glu) in a two-step reaction: glutamate is first activated by ATP to form Glu-AMP and then transferred to the acceptor end of tRNA(Glu). This chain is Glutamate--tRNA ligase, found in Aromatoleum aromaticum (strain DSM 19018 / LMG 30748 / EbN1) (Azoarcus sp. (strain EbN1)).